Here is a 145-residue protein sequence, read N- to C-terminus: MAQKQTPSGPTQRQQRVAELIRHALAEVLQRGDIQDPVLGSHVVTVPEVRMSPDLKLATAYVMPLGGQDEAPVIAALERHKKILRQEVARRVNLKFAPDLRFRRDETFDEAARIDQLLRSEKVQRDLESAPREDDEGEPDSSSRD.

A compositionally biased stretch (basic and acidic residues) spans 122–132 (KVQRDLESAPR). The tract at residues 122–145 (KVQRDLESAPREDDEGEPDSSSRD) is disordered.

Belongs to the RbfA family. Monomer. Binds 30S ribosomal subunits, but not 50S ribosomal subunits or 70S ribosomes.

Its subcellular location is the cytoplasm. Its function is as follows. One of several proteins that assist in the late maturation steps of the functional core of the 30S ribosomal subunit. Associates with free 30S ribosomal subunits (but not with 30S subunits that are part of 70S ribosomes or polysomes). Required for efficient processing of 16S rRNA. May interact with the 5'-terminal helix region of 16S rRNA. The protein is Ribosome-binding factor A of Methylorubrum extorquens (strain PA1) (Methylobacterium extorquens).